A 233-amino-acid chain; its full sequence is ATP synthase subunit a (233 aa).

7 consecutive transmembrane segments (helical) span residues 29 to 49, 60 to 80, 89 to 109, 115 to 135, 143 to 163, 185 to 205, and 206 to 226; these read FKHV…SFIV, LQNI…SITG, VLIV…VPGF, NINT…YIGI, IKHF…LELI, FVLI…IYFL, and FTLA…IYLK.

Belongs to the ATPase A chain family. F-type ATPases have 2 components, CF(1) - the catalytic core - and CF(0) - the membrane proton channel. CF(1) has five subunits: alpha(3), beta(3), gamma(1), delta(1), epsilon(1). CF(0) has three main subunits: a(1), b(2) and c(9-12). The alpha and beta chains form an alternating ring which encloses part of the gamma chain. CF(1) is attached to CF(0) by a central stalk formed by the gamma and epsilon chains, while a peripheral stalk is formed by the delta and b chains.

It localises to the cell inner membrane. In terms of biological role, key component of the proton channel; it plays a direct role in the translocation of protons across the membrane. The polypeptide is ATP synthase subunit a (Oleidesulfovibrio alaskensis (strain ATCC BAA-1058 / DSM 17464 / G20) (Desulfovibrio alaskensis)).